The chain runs to 342 residues: Holliday junction branch migration complex subunit RuvB (342 aa).

The segment at 1–181 (MENRMVTPFD…FGMLCAMEFY (181 aa)) is large ATPase domain (RuvB-L). ATP is bound by residues Leu20, Arg21, Gly62, Lys65, Thr66, Thr67, 128–130 (EDY), Arg171, Tyr181, and Arg218. Thr66 provides a ligand contact to Mg(2+). The segment at 182–252 (TDEELMEIVV…GAKAALDLLE (71 aa)) is small ATPAse domain (RuvB-S). The tract at residues 255-342 (KEGLDKIDNK…KDNQVSIFNK (88 aa)) is head domain (RuvB-H). Residues Arg310 and Arg315 each contribute to the DNA site.

This sequence belongs to the RuvB family. As to quaternary structure, homohexamer. Forms an RuvA(8)-RuvB(12)-Holliday junction (HJ) complex. HJ DNA is sandwiched between 2 RuvA tetramers; dsDNA enters through RuvA and exits via RuvB. An RuvB hexamer assembles on each DNA strand where it exits the tetramer. Each RuvB hexamer is contacted by two RuvA subunits (via domain III) on 2 adjacent RuvB subunits; this complex drives branch migration. In the full resolvosome a probable DNA-RuvA(4)-RuvB(12)-RuvC(2) complex forms which resolves the HJ.

The protein localises to the cytoplasm. It carries out the reaction ATP + H2O = ADP + phosphate + H(+). The RuvA-RuvB-RuvC complex processes Holliday junction (HJ) DNA during genetic recombination and DNA repair, while the RuvA-RuvB complex plays an important role in the rescue of blocked DNA replication forks via replication fork reversal (RFR). RuvA specifically binds to HJ cruciform DNA, conferring on it an open structure. The RuvB hexamer acts as an ATP-dependent pump, pulling dsDNA into and through the RuvAB complex. RuvB forms 2 homohexamers on either side of HJ DNA bound by 1 or 2 RuvA tetramers; 4 subunits per hexamer contact DNA at a time. Coordinated motions by a converter formed by DNA-disengaged RuvB subunits stimulates ATP hydrolysis and nucleotide exchange. Immobilization of the converter enables RuvB to convert the ATP-contained energy into a lever motion, pulling 2 nucleotides of DNA out of the RuvA tetramer per ATP hydrolyzed, thus driving DNA branch migration. The RuvB motors rotate together with the DNA substrate, which together with the progressing nucleotide cycle form the mechanistic basis for DNA recombination by continuous HJ branch migration. Branch migration allows RuvC to scan DNA until it finds its consensus sequence, where it cleaves and resolves cruciform DNA. This chain is Holliday junction branch migration complex subunit RuvB, found in Clostridium botulinum (strain 657 / Type Ba4).